We begin with the raw amino-acid sequence, 725 residues long: Ribosomal RNA large subunit methyltransferase K/L (725 aa).

The 112-residue stretch at 46–157 (VAYRLCLWSR…RGQATLSLDL (112 aa)) folds into the THUMP domain. The segment at 393 to 412 (TGERGERNDDGQARAPSEPA) is disordered. Residues 395 to 404 (ERGERNDDGQ) are compositionally biased toward basic and acidic residues.

Belongs to the methyltransferase superfamily. RlmKL family.

It is found in the cytoplasm. The enzyme catalyses guanosine(2445) in 23S rRNA + S-adenosyl-L-methionine = N(2)-methylguanosine(2445) in 23S rRNA + S-adenosyl-L-homocysteine + H(+). The catalysed reaction is guanosine(2069) in 23S rRNA + S-adenosyl-L-methionine = N(2)-methylguanosine(2069) in 23S rRNA + S-adenosyl-L-homocysteine + H(+). Functionally, specifically methylates the guanine in position 2445 (m2G2445) and the guanine in position 2069 (m7G2069) of 23S rRNA. This is Ribosomal RNA large subunit methyltransferase K/L from Pseudomonas paraeruginosa (strain DSM 24068 / PA7) (Pseudomonas aeruginosa (strain PA7)).